The primary structure comprises 43 residues: Large ribosomal subunit protein uL5 (43 aa).

The protein belongs to the universal ribosomal protein uL5 family. In terms of assembly, part of the 50S ribosomal subunit; part of the 5S rRNA/L5/L18/L25 subcomplex. Contacts the 5S rRNA and the P site tRNA. Forms a bridge to the 30S subunit in the 70S ribosome.

Its function is as follows. This is one of the proteins that bind and probably mediate the attachment of the 5S RNA into the large ribosomal subunit, where it forms part of the central protuberance. In the 70S ribosome it contacts protein S13 of the 30S subunit (bridge B1b), connecting the 2 subunits; this bridge is implicated in subunit movement. Contacts the P site tRNA; the 5S rRNA and some of its associated proteins might help stabilize positioning of ribosome-bound tRNAs. The protein is Large ribosomal subunit protein uL5 (rplE) of Serratia marcescens.